The primary structure comprises 234 residues: Leucyl/phenylalanyl-tRNA--protein transferase (234 aa).

This sequence belongs to the L/F-transferase family.

The protein resides in the cytoplasm. The enzyme catalyses N-terminal L-lysyl-[protein] + L-leucyl-tRNA(Leu) = N-terminal L-leucyl-L-lysyl-[protein] + tRNA(Leu) + H(+). The catalysed reaction is N-terminal L-arginyl-[protein] + L-leucyl-tRNA(Leu) = N-terminal L-leucyl-L-arginyl-[protein] + tRNA(Leu) + H(+). It catalyses the reaction L-phenylalanyl-tRNA(Phe) + an N-terminal L-alpha-aminoacyl-[protein] = an N-terminal L-phenylalanyl-L-alpha-aminoacyl-[protein] + tRNA(Phe). In terms of biological role, functions in the N-end rule pathway of protein degradation where it conjugates Leu, Phe and, less efficiently, Met from aminoacyl-tRNAs to the N-termini of proteins containing an N-terminal arginine or lysine. This is Leucyl/phenylalanyl-tRNA--protein transferase from Klebsiella pneumoniae (strain 342).